A 60-amino-acid chain; its full sequence is Large ribosomal subunit protein uL30 (60 aa).

The protein belongs to the universal ribosomal protein uL30 family. As to quaternary structure, part of the 50S ribosomal subunit.

The polypeptide is Large ribosomal subunit protein uL30 (Bacillus cereus (strain G9842)).